We begin with the raw amino-acid sequence, 218 residues long: Thiopurine S-methyltransferase (218 aa).

S-adenosyl-L-methionine-binding residues include Trp10, Leu45, Glu66, and Arg123.

Belongs to the class I-like SAM-binding methyltransferase superfamily. TPMT family.

The protein resides in the cytoplasm. It carries out the reaction S-adenosyl-L-methionine + a thiopurine = S-adenosyl-L-homocysteine + a thiopurine S-methylether.. The polypeptide is Thiopurine S-methyltransferase (Shewanella denitrificans (strain OS217 / ATCC BAA-1090 / DSM 15013)).